The sequence spans 453 residues: tRNA modification GTPase MnmE (453 aa).

Residues arginine 22, glutamate 79, and lysine 119 each coordinate (6S)-5-formyl-5,6,7,8-tetrahydrofolate. The TrmE-type G domain maps to 215-376; that stretch reads GMKVVIAGRP…LKLHLKSLMG (162 aa). Position 225 (asparagine 225) interacts with K(+). Residues 225 to 230, 244 to 250, 269 to 272, and 334 to 337 each bind GTP; these read NAGKSS, TEIAGTT, DTAG, and NKAD. Serine 229 is a binding site for Mg(2+). K(+) contacts are provided by threonine 244, isoleucine 246, and threonine 249. Residue threonine 250 coordinates Mg(2+). Lysine 453 serves as a coordination point for (6S)-5-formyl-5,6,7,8-tetrahydrofolate.

Belongs to the TRAFAC class TrmE-Era-EngA-EngB-Septin-like GTPase superfamily. TrmE GTPase family. As to quaternary structure, homodimer. Heterotetramer of two MnmE and two MnmG subunits. K(+) is required as a cofactor.

The protein resides in the cytoplasm. Exhibits a very high intrinsic GTPase hydrolysis rate. Involved in the addition of a carboxymethylaminomethyl (cmnm) group at the wobble position (U34) of certain tRNAs, forming tRNA-cmnm(5)s(2)U34. The protein is tRNA modification GTPase MnmE of Shewanella putrefaciens (strain CN-32 / ATCC BAA-453).